A 418-amino-acid chain; its full sequence is Putative ion-transport protein YfeO (418 aa).

Transmembrane regions (helical) follow at residues 15-37, 57-79, 99-118, 149-171, 186-208, 221-243, 258-280, 301-323, 343-363, and 376-398; these read PAVA…ASVL, LWII…FSQG, ALPR…VSLG, ILAS…LIFS, LFAP…HPHF, TDIL…AVWC, VLVL…PVSL, YFLL…FRGG, VPAV…VLVV, and VVVP…WLLL.

The protein belongs to the chloride channel (TC 2.A.49) family.

Its subcellular location is the cell membrane. The polypeptide is Putative ion-transport protein YfeO (yfeO) (Shigella flexneri).